Reading from the N-terminus, the 228-residue chain is 2,3-bisphosphoglycerate-dependent phosphoglycerate mutase (228 aa).

Substrate-binding positions include 8 to 15, 21 to 22, Arg60, 87 to 90, Lys98, 114 to 115, and 183 to 184; these read RHGLSEWN, TG, ERHY, RR, and GN. Residue His9 is the Tele-phosphohistidine intermediate of the active site. Residue Glu87 is the Proton donor/acceptor of the active site.

Belongs to the phosphoglycerate mutase family. BPG-dependent PGAM subfamily.

The catalysed reaction is (2R)-2-phosphoglycerate = (2R)-3-phosphoglycerate. The protein operates within carbohydrate degradation; glycolysis; pyruvate from D-glyceraldehyde 3-phosphate: step 3/5. Catalyzes the interconversion of 2-phosphoglycerate and 3-phosphoglycerate. This Enterococcus faecalis (strain ATCC 700802 / V583) protein is 2,3-bisphosphoglycerate-dependent phosphoglycerate mutase.